The chain runs to 478 residues: Cysteine protease ATG4B (478 aa).

A compositionally biased stretch (polar residues) spans 1–15; the sequence is MTSLPDRGVSSSSSD. The segment at 1 to 20 is disordered; it reads MTSLPDRGVSSSSSDPLCEG. Cys-164 acts as the Nucleophile in catalysis. Residues Asp-361 and His-363 contribute to the active site.

Belongs to the peptidase C54 family. In terms of assembly, interacts with ATG8. Constitutively expressed.

It localises to the cytoplasm. It carries out the reaction [protein]-C-terminal L-amino acid-glycyl-phosphatidylethanolamide + H2O = [protein]-C-terminal L-amino acid-glycine + a 1,2-diacyl-sn-glycero-3-phosphoethanolamine. Cysteine protease that plays a key role in autophagy by mediating both proteolytic activation and delipidation of ATG8 family proteins. The protease activity is required for proteolytic activation of ATG8 family proteins: cleaves the C-terminal amino acid of ATG8 proteins to reveal a C-terminal glycine. Exposure of the glycine at the C-terminus is essential for ATG8 proteins conjugation to phosphatidylethanolamine (PE) and insertion to membranes, which is necessary for autophagy. In addition to the protease activity, also mediates delipidation of PE-conjugated ATG8 proteins. The chain is Cysteine protease ATG4B (ATG4B) from Oryza sativa subsp. indica (Rice).